A 216-amino-acid polypeptide reads, in one-letter code: Thiopurine S-methyltransferase (216 aa).

Positions 11, 46, 67, and 122 each coordinate S-adenosyl-L-methionine.

Belongs to the class I-like SAM-binding methyltransferase superfamily. TPMT family.

It localises to the cytoplasm. The enzyme catalyses S-adenosyl-L-methionine + a thiopurine = S-adenosyl-L-homocysteine + a thiopurine S-methylether.. The chain is Thiopurine S-methyltransferase from Vibrio campbellii (strain ATCC BAA-1116).